The sequence spans 522 residues: Stellatic acid synthase (522 aa).

Residues 23–43 (IYGIYEPLLALFAVYSVAVVV) form a helical membrane-spanning segment. 2 N-linked (GlcNAc...) asparagine glycosylation sites follow: Asn-267 and Asn-451. Heme is bound at residue Cys-464. Asn-495 carries an N-linked (GlcNAc...) asparagine glycan.

It belongs to the cytochrome P450 family. It depends on heme as a cofactor.

It localises to the membrane. The catalysed reaction is stellata-2,6,19-triene + 3 reduced [NADPH--hemoprotein reductase] + 3 O2 = stellatate + 3 oxidized [NADPH--hemoprotein reductase] + 4 H2O + 4 H(+). Its pathway is secondary metabolite biosynthesis; terpenoid biosynthesis. In terms of biological role, cytochrome P450 monooxygenase; part of the gene cluster that mediates the biosynthesis of the sesterterpene stellatic acid. The first step in the pathway is performed by the stellatatriene synthase that possesses both prenyl transferase and terpene cyclase activity, converting isopentenyl diphosphate and dimethylallyl diphosphate into geranylgeranyl diphosphate (GGDP) and then converting GGDP into stellata-2,6,19-triene. The cytochrome P450 monooxygenase Stl-P450 then catalyzes three successive oxidation reactions on the C-20 methyl group to generate the carboxylic acid of stellatic acid. The chain is Stellatic acid synthase from Emericella variicolor (Aspergillus stellatus).